A 2513-amino-acid polypeptide reads, in one-letter code: Polyprotein P1234 (2513 aa).

Residues 28 to 259 form the Alphavirus-like MT domain; sequence EPKQVTPNDH…ESRKLLQSWH (232 aa). The tract at residues 244-263 is nsP1 membrane-binding; sequence GSTLYPESRKLLQSWHLPSV. Residues cysteine 417 and cysteine 419 are each lipidated (S-palmitoyl cysteine; by host). Residues 690-842 enclose the (+)RNA virus helicase ATP-binding domain; sequence DLTSPPYHEF…HNICTQVYHK (153 aa). 721–728 is an a ribonucleoside 5'-triphosphate binding site; it reads GVPGSGKS. Residues 843 to 991 form the (+)RNA virus helicase C-terminal domain; it reads SISRRCTLPV…IKEWEAEHAS (149 aa). Residues 1004–1327 form the Peptidase C9 domain; the sequence is DTFQNKANVC…NQLNAVYAGL (324 aa). The interval 1005-1024 is nucleolus localization signal; sequence TFQNKANVCWAKCLVPILDT. Residue cysteine 1013 is the For cysteine protease nsP2 activity of the active site. The short motif at 1058–1067 is the Nuclear export signal element; the sequence is TRIYGVDLDS. The active-site For cysteine protease nsP2 activity is the histidine 1083. The Nuclear localization signal signature appears at 1182-1186; the sequence is PTKRV. ADP-D-ribose contacts are provided by aspartate 1343, asparagine 1357, glycine 1365, glycine 1445, valine 1446, and tyrosine 1447. Positions 1595, 1597, 1620, and 1638 each coordinate Zn(2+). Short sequence motifs (FGDF; binding to host G3BP1) lie at residues 1851 to 1854 and 1869 to 1872; these read FGDF. In terms of domain architecture, RdRp catalytic spans 2267–2382; it reads DAVLETDIAS…HGVVSDALMA (116 aa).

In terms of assembly, interacts with non-structural protein 3. Interacts with RNA-directed RNA polymerase nsP4. Interacts with protease nsP2. interacts with itself. Interacts with mRNA-capping enzyme nsP1. Interacts with host DDX1. Interacts with host DDX3. Interacts (via C-terminus) with host G3BP1; this interaction inhibits the formation of host stress granules on viral mRNAs and the nsp3-G3BP1 complexes bind viral RNAs and probably orchestrate the assembly of viral replication complexes. Interacts (via C-terminus) with host G3BP2; this interaction inhibits the formation of host stress granules on viral mRNAs and the nsp3-G3BP2 complexes bind viral RNAs and probably orchestrate the assembly of viral replication complexes. As to quaternary structure, interacts with mRNA-capping enzyme nsP1. Interacts with protease nsP2. interacts with itself. In terms of assembly, interacts with RNA-directed RNA polymerase nsP4. Interacts with mRNA-capping enzyme nsP1. Interacts with KPNA1/karyopherin-alpha1; this interaction probably allows the active transport of protease nsP2 into the host nucleus. Requires Mg(2+) as cofactor. It depends on Mn(2+) as a cofactor. In terms of processing, specific enzymatic cleavages in vivo yield mature proteins. The processing of the polyprotein is temporally regulated. In early stages (1.7 hpi), P1234 is first cleaved in trans through its nsP2 protease activity, releasing P123' and nsP4, which associate to form the early replication complex. At the same time, P1234 is also cut at the nsP1/nsP2 site early in infection but with lower efficiency. After replication of the viral minus-strand RNAs (4 hpi), the polyproteins are cut at the nsP1/nsP2 and nsP2/nsP3 sites very efficiently, preventing accumulation of P123' and P1234 and allowing the formation of the late replication complex. NsP3'/nsP4 site is not cleaved anymore and P34 is produced rather than nsP4. Post-translationally, specific enzymatic cleavages in vivo yield mature proteins. The processing of the polyprotein is temporally regulated. In early stages (1.7 hpi), P123 is cleaved at the nsP1/nsP2 site with low efficiency. After replication of the viral minus-strand RNAs (4 hpi), the polyproteins are cut at the nsP1/nsP2 and nsP2/nsP3 sites very efficiently, preventing accumulation of P123 and allowing the formation of the late replication complex. Specific enzymatic cleavages in vivo yield mature proteins. The processing of the polyprotein is temporally regulated. In early stages (1.7 hpi), P123 is cleaved at the nsP1/nsP2 site with low efficiency. After replication of the viral minus-strand RNAs (4 hpi), the polyproteins are cut at the nsP1/nsP2 and nsP2/nsP3 sites very efficiently, preventing accumulation of P123' and allowing the formation of the late replication complex. In terms of processing, palmitoylated by host palmitoyltransferases ZDHHC2 and ZDHHC19. Post-translationally, phosphorylated by host on serines and threonines. Ubiquitinated; targets the protein for rapid degradation via the ubiquitin system. Nsp4 is present in extremely low quantities due to low frequency of translation through the amber stop-codon and the degradation by the ubiquitin pathway.

Its subcellular location is the host cytoplasmic vesicle membrane. The protein localises to the host cell membrane. It localises to the host cell projection. It is found in the host filopodium. The protein resides in the host nucleus. Its subcellular location is the host cytoplasm. It catalyses the reaction GTP + S-adenosyl-L-methionine = N(7)-methyl-GTP + S-adenosyl-L-homocysteine. It carries out the reaction N(7)-methyl-GTP + L-histidyl-[protein] = N(tele)-(N(7)-methylguanosine 5'-phospho)-L-histidyl-[protein] + diphosphate. The catalysed reaction is N(tele)-(N(7)-methylguanosine 5'-phospho)-L-histidyl-[protein] + a 5'-end diphospho-(purine-ribonucleoside) in mRNA + H(+) = a 5'-end (N(7)-methyl 5'-triphosphoguanosine)-(purine-ribonucleoside) in mRNA + L-histidyl-[protein]. The enzyme catalyses a 5'-end triphospho-ribonucleoside in mRNA + H2O = a 5'-end diphospho-ribonucleoside in mRNA + phosphate + H(+). It catalyses the reaction a ribonucleoside 5'-triphosphate + H2O = a ribonucleoside 5'-diphosphate + phosphate + H(+). It carries out the reaction ATP + H2O = ADP + phosphate + H(+). The catalysed reaction is RNA(n) + a ribonucleoside 5'-triphosphate = RNA(n+1) + diphosphate. The enzyme catalyses 4-O-(ADP-D-ribosyl)-L-aspartyl-[protein] + H2O = L-aspartyl-[protein] + ADP-D-ribose + H(+). It catalyses the reaction 5-O-(ADP-D-ribosyl)-L-glutamyl-[protein] + H2O = L-glutamyl-[protein] + ADP-D-ribose + H(+). It carries out the reaction RNA(n) + ATP = RNA(n)-3'-adenine ribonucleotide + diphosphate. The catalysed reaction is ADP-alpha-D-ribose 1''-phosphate + H2O = ADP-D-ribose + phosphate. Inactive precursor of the viral replicase, which is activated by cleavages carried out by the viral protease nsP2. In terms of biological role, the early replication complex formed by the polyprotein P123' and nsP4 synthesizes minus-strand RNAs. Polyprotein P123' is a short-lived polyprotein that accumulates during early stage of infection. As soon P123' is cleaved into mature proteins, the plus-strand RNAs synthesis begins. Its function is as follows. The early replication complex formed by the polyprotein P123 and nsP4 synthesizes minus-strand RNAs. As soon P123 is cleaved into mature proteins, the plus-strand RNAs synthesis begins. Functionally, cytoplasmic capping enzyme that catalyzes two virus-specific reactions: methyltransferase and nsP1 guanylyltransferase. mRNA-capping is necessary since all viral RNAs are synthesized in the cytoplasm, and host capping enzymes are restricted to the nucleus. The enzymatic reaction involves a covalent link between 7-methyl-GMP and nsP1, whereas eukaryotic capping enzymes form a covalent complex only with GMP. nsP1 capping consists in the following reactions: GTP is first methylated into 7-methyl-GMP and then is covalently linked to nsP1 to form the m7GMp-nsP1 complex from which 7-methyl-GMP complex is transferred to the mRNA to create the cap structure. NsP1 is also needed for the initiation of the minus-strand RNAs synthesis. Probably serves as a membrane anchor for the replication complex composed of nsP1-nsP4. Palmitoylated nsP1 is remodeling host cell cytoskeleton, and induces filopodium-like structure formation at the surface of the host cell. Multifunctional protein whose N-terminus is part of the RNA polymerase complex and displays NTPase, RNA triphosphatase and helicase activities. NTPase and RNA triphosphatase are involved in viral RNA capping and helicase keeps a check on the dsRNA replication intermediates. The C-terminus harbors a protease that specifically cleaves the polyproteins and releases the mature proteins. Required for the shutoff of minus-strand RNAs synthesis. Specifically inhibits the host IFN response by promoting the nuclear export of host STAT1. Also inhibits host transcription by inducing the rapid proteasome-dependent degradation of POLR2A, a catalytic subunit of the RNAPII complex. The resulting inhibition of cellular protein synthesis serves to ensure maximal viral gene expression and to evade host immune response. In terms of biological role, seems to be essential for minus-strand RNAs and subgenomic 26S mRNAs synthesis. Displays mono-ADP-ribosylhydrolase activity. ADP-ribosylation is a post-translational modification that controls various processes of the host cell and the virus probably needs to revert it for optimal viral replication. Binds proteins of FXR family and sequesters them into the viral RNA replication complexes thereby inhibiting the formation of host stress granules on viral mRNAs. The nsp3'-FXR complexes bind viral RNAs and probably orchestrate the assembly of viral replication complexes, thanks to the ability of FXR family members to self-assemble and bind DNA. Its function is as follows. Seems to be essential for minus-strand RNAs and subgenomic 26S mRNAs synthesis. Displays mono-ADP-ribosylhydrolase activity. ADP-ribosylation is a post-translational modification that controls various processes of the host cell and the virus probably needs to revert it for optimal viral replication. Binds proteins of G3BP family and sequesters them into the viral RNA replication complexes thereby inhibiting the formation of host stress granules on viral mRNAs. The nsp3-G3BP complexes bind viral RNAs and probably orchestrate the assembly of viral replication complexes, thanks to the ability of G3BP family members to self-assemble and bind DNA. Functionally, RNA dependent RNA polymerase. Replicates genomic and antigenomic RNA by recognizing replications specific signals. The early replication complex formed by the polyprotein P123 and nsP4 synthesizes minus-strand RNAs. The late replication complex composed of fully processed nsP1-nsP4 is responsible for the production of genomic and subgenomic plus-strand RNAs. The protein is Polyprotein P1234 of Anopheles (Human).